We begin with the raw amino-acid sequence, 187 residues long: Elongation factor P (187 aa).

The protein belongs to the elongation factor P family.

Its subcellular location is the cytoplasm. The protein operates within protein biosynthesis; polypeptide chain elongation. Its function is as follows. Involved in peptide bond synthesis. Stimulates efficient translation and peptide-bond synthesis on native or reconstituted 70S ribosomes in vitro. Probably functions indirectly by altering the affinity of the ribosome for aminoacyl-tRNA, thus increasing their reactivity as acceptors for peptidyl transferase. This Mycoplasmopsis pulmonis (strain UAB CTIP) (Mycoplasma pulmonis) protein is Elongation factor P.